The following is a 671-amino-acid chain: MSEFQLVTRFQPAGDQPEAIRLMVEGIEAGLAHQTLLGVTGSGKTFSIANVIAQVQRPTLVLAPNKTLAAQLYGEFKAFFPNNAVEYFVSYYDYYQPEAYVPSSDTFIEKDASINDHIEQMRLSATKALLERKDAIIVTTVSCIYGLGSPETYLKMVLHVDRGDKLDQRALLRRLADLQYTRNDMDFARATFRVRGDVIDIYPAESDLEAIRIELFDDEVESISAFDPLTGEVIRKLPRFTFYPKSHYVTPRETLLDAIEGIKVELQERLEYLRSNNKLVEAQRLEQRTRFDLEMILELGYCNGIENYSRYLSGRPAGAAPPTLYDYLPADALLVIDESHVSVPQVGAMYKGDRSRKETLVEYGFRLPSALDNRPMRFDEWEGVSPQTIFVSATPGNYEAEHAGRVVEQVVRPTGLVDPQVEVRPALTQVDDLLSEITKRVAVEERVLVTTLTKRMAEDLTDYLADHGVRVRYLHSDIDTVERVEIIRDLRLGTFDVLVGINLLREGLDMPEVSLVAILDADKEGFLRSERSLIQTIGRAARNLNGRAILYADRITGSMERAIGETERRRDKQIAFNLANGITPKGVVKDVADIMEGATVPGSRSKKRKGMAKAAEENARYENELRSPSEITKRIRQLEEKMYQLARDLEFEAAAQMRDEITKLRERLLTV.

One can recognise a Helicase ATP-binding domain in the interval 25-412 (EGIEAGLAHQ…AGRVVEQVVR (388 aa)). 38-45 (GVTGSGKT) contacts ATP. The Beta-hairpin signature appears at 91–114 (YYDYYQPEAYVPSSDTFIEKDASI). The 154-residue stretch at 429-582 (QVDDLLSEIT…QIAFNLANGI (154 aa)) folds into the Helicase C-terminal domain. The segment at 601-623 (PGSRSKKRKGMAKAAEENARYEN) is disordered. A compositionally biased stretch (basic and acidic residues) spans 614-623 (AAEENARYEN). In terms of domain architecture, UVR spans 632–667 (TKRIRQLEEKMYQLARDLEFEAAAQMRDEITKLRER).

The protein belongs to the UvrB family. As to quaternary structure, forms a heterotetramer with UvrA during the search for lesions. Interacts with UvrC in an incision complex.

It is found in the cytoplasm. Functionally, the UvrABC repair system catalyzes the recognition and processing of DNA lesions. A damage recognition complex composed of 2 UvrA and 2 UvrB subunits scans DNA for abnormalities. Upon binding of the UvrA(2)B(2) complex to a putative damaged site, the DNA wraps around one UvrB monomer. DNA wrap is dependent on ATP binding by UvrB and probably causes local melting of the DNA helix, facilitating insertion of UvrB beta-hairpin between the DNA strands. Then UvrB probes one DNA strand for the presence of a lesion. If a lesion is found the UvrA subunits dissociate and the UvrB-DNA preincision complex is formed. This complex is subsequently bound by UvrC and the second UvrB is released. If no lesion is found, the DNA wraps around the other UvrB subunit that will check the other stand for damage. The sequence is that of UvrABC system protein B from Pseudomonas fluorescens (strain ATCC BAA-477 / NRRL B-23932 / Pf-5).